Reading from the N-terminus, the 122-residue chain is Large ribosomal subunit protein uL14 (122 aa).

This sequence belongs to the universal ribosomal protein uL14 family. As to quaternary structure, part of the 50S ribosomal subunit. Forms a cluster with proteins L3 and L19. In the 70S ribosome, L14 and L19 interact and together make contacts with the 16S rRNA in bridges B5 and B8.

Its function is as follows. Binds to 23S rRNA. Forms part of two intersubunit bridges in the 70S ribosome. In Chloroflexus aggregans (strain MD-66 / DSM 9485), this protein is Large ribosomal subunit protein uL14.